A 416-amino-acid chain; its full sequence is Serine hydroxymethyltransferase (416 aa).

(6S)-5,6,7,8-tetrahydrofolate is bound by residues Leu121 and 125–127 (GHL). Residue Lys229 is modified to N6-(pyridoxal phosphate)lysine.

This sequence belongs to the SHMT family. As to quaternary structure, homodimer. Pyridoxal 5'-phosphate is required as a cofactor.

It is found in the cytoplasm. The enzyme catalyses (6R)-5,10-methylene-5,6,7,8-tetrahydrofolate + glycine + H2O = (6S)-5,6,7,8-tetrahydrofolate + L-serine. Its pathway is one-carbon metabolism; tetrahydrofolate interconversion. It functions in the pathway amino-acid biosynthesis; glycine biosynthesis; glycine from L-serine: step 1/1. Its function is as follows. Catalyzes the reversible interconversion of serine and glycine with tetrahydrofolate (THF) serving as the one-carbon carrier. This reaction serves as the major source of one-carbon groups required for the biosynthesis of purines, thymidylate, methionine, and other important biomolecules. Also exhibits THF-independent aldolase activity toward beta-hydroxyamino acids, producing glycine and aldehydes, via a retro-aldol mechanism. This is Serine hydroxymethyltransferase from Bordetella avium (strain 197N).